A 353-amino-acid chain; its full sequence is UPF0283 membrane protein YcjF (353 aa).

A run of 3 helical transmembrane segments spans residues 70–90 (MVMG…VQWT), 100–120 (VALG…GSVV), and 213–233 (ESTL…FIAW).

The protein belongs to the UPF0283 family.

The protein resides in the cell inner membrane. This chain is UPF0283 membrane protein YcjF, found in Escherichia coli O7:K1 (strain IAI39 / ExPEC).